Consider the following 388-residue polypeptide: Succinate--CoA ligase [ADP-forming] subunit beta (388 aa).

The 236-residue stretch at 9–244 (KQLFADYGLP…PSQEDPREAH (236 aa)) folds into the ATP-grasp domain. Residues Lys-46, 53–55 (GRG), Glu-99, Thr-102, and Glu-107 contribute to the ATP site. Positions 199 and 213 each coordinate Mg(2+). Substrate contacts are provided by residues Asn-264 and 321 to 323 (GIV).

Belongs to the succinate/malate CoA ligase beta subunit family. In terms of assembly, heterotetramer of two alpha and two beta subunits. Mg(2+) serves as cofactor.

It carries out the reaction succinate + ATP + CoA = succinyl-CoA + ADP + phosphate. It catalyses the reaction GTP + succinate + CoA = succinyl-CoA + GDP + phosphate. It functions in the pathway carbohydrate metabolism; tricarboxylic acid cycle; succinate from succinyl-CoA (ligase route): step 1/1. Functionally, succinyl-CoA synthetase functions in the citric acid cycle (TCA), coupling the hydrolysis of succinyl-CoA to the synthesis of either ATP or GTP and thus represents the only step of substrate-level phosphorylation in the TCA. The beta subunit provides nucleotide specificity of the enzyme and binds the substrate succinate, while the binding sites for coenzyme A and phosphate are found in the alpha subunit. In Hahella chejuensis (strain KCTC 2396), this protein is Succinate--CoA ligase [ADP-forming] subunit beta.